A 200-amino-acid chain; its full sequence is Snake venom metalloproteinase BmooMP-I (200 aa).

The Peptidase M12B domain occupies 5–200 (RYIELAVVAD…HNPQCILNEP (196 aa)). The Ca(2+) site is built by glutamate 8 and aspartate 92. 3 disulfide bridges follow: cysteine 116/cysteine 195, cysteine 155/cysteine 179, and cysteine 157/cysteine 162. Histidine 141 provides a ligand contact to Zn(2+). Residue glutamate 142 is part of the active site. Zn(2+)-binding residues include histidine 145 and histidine 151. Cysteine 195 and asparagine 198 together coordinate Ca(2+).

This sequence belongs to the venom metalloproteinase (M12B) family. P-I subfamily. Monomer. Zn(2+) is required as a cofactor. Expressed by the venom gland.

It localises to the secreted. Zinc metalloprotease that displays fibrinogenolytic, gelatinase and weak hemorrhagic activities. Degrades the three chain of fibrinogen Aalpha-chain (FGA), Bbeta-chain (FGB), and gamma (FGG). The sequence is that of Snake venom metalloproteinase BmooMP-I from Bothrops moojeni (Lance-headed viper).